Here is an 84-residue protein sequence, read N- to C-terminus: RQC P-site tRNA stabilizing factor (84 aa).

Residues 1-64 (MRIDKFLQSV…IEEYTILQIP (64 aa)) form the S4 RNA-binding domain.

It belongs to the RqcP family. In terms of assembly, associates with stalled 50S ribosomal subunits. Binds to RqcH, 23S rRNA and the P-site tRNA. Does not require RqcH for association with 50S subunits.

In terms of biological role, key component of the ribosome quality control system (RQC), a ribosome-associated complex that mediates the extraction of incompletely synthesized nascent chains from stalled ribosomes and their subsequent degradation. RqcH recruits Ala-charged tRNA, and with RqcP directs the elongation of stalled nascent chains on 50S ribosomal subunits, leading to non-templated C-terminal alanine extensions (Ala tail). The Ala tail promotes nascent chain degradation. RqcP is associated with the translocation-like movement of the peptidyl-tRNA from the A-site into the P-site. This chain is RQC P-site tRNA stabilizing factor, found in Helicobacter pylori (strain J99 / ATCC 700824) (Campylobacter pylori J99).